The sequence spans 438 residues: UPF0229 protein Smed_1028 (438 aa).

A disordered region spans residues 55–107 (PARGVNEPAFQPDSNSGERRHVLPGNREFAAGDRIPKRGGGGGAGNAGAGTGQ). A compositionally biased stretch (gly residues) spans 92–105 (RGGGGGAGNAGAGT).

This sequence belongs to the UPF0229 family.

This Sinorhizobium medicae (strain WSM419) (Ensifer medicae) protein is UPF0229 protein Smed_1028.